A 393-amino-acid chain; its full sequence is Envelope glycoprotein D (393 aa).

The first 25 residues, 1–25 (MGRLTSGVGTAALLVVAVGLRVVCA), serve as a signal peptide directing secretion. The segment at 25–57 (AKYALADPSLKMADPNRFRGKNLPVLDQLTDPP) is interaction with TNFRSF14. The Virion surface portion of the chain corresponds to 26–340 (KYALADPSLK…HAPAAPSNPG (315 aa)). A Zn(2+)-binding site is contributed by H64. 3 cysteine pairs are disulfide-bonded: C91–C214, C131–C227, and C143–C152. N119 and N146 each carry an N-linked (GlcNAc...) asparagine; by host glycan. D240 contacts Zn(2+). The interval 261-305 (LKIAGWHGPKPPYTSTLLPPELSDTTNATQPELVPEDPEDSALLE) is profusion. The segment covering 274–290 (TSTLLPPELSDTTNATQ) has biased composition (polar residues). The disordered stretch occupies residues 274–301 (TSTLLPPELSDTTNATQPELVPEDPEDS). N-linked (GlcNAc...) asparagine; by host glycosylation occurs at N287. The helical transmembrane segment at 341-361 (LIIGALAGSTLAVLVIGGIAF) threads the bilayer. The Intravirion segment spans residues 362–393 (WVRRRAQMAPKRLRLPHIRDDDAPPSHQPLFY).

The protein belongs to the herpesviridae glycoprotein D family. As to quaternary structure, homodimer. Interacts with host receptor TNFRSF14. Interacts with host receptor NECTIN1. Interacts with host receptor NECTIN2. Interacts (via profusion domain) with gB; this interaction occurs in the absence of gH/gL. Interacts (via profusion domain) with gH/gL heterodimer; this interaction occurs in the absence of gB. Associates with the gB-gH/gL-gD complex. Interacts (via C-terminus) with UL11 tegument protein.

It is found in the virion membrane. Its function is as follows. Envelope glycoprotein that binds to the host cell entry receptors NECTIN1 and TNFRSF14/HVEM, promoting the virus entry into host cells. May trigger fusion with host membrane, by recruiting the fusion machinery composed of gB and gH/gL. The sequence is that of Envelope glycoprotein D (gD) from Human herpesvirus 2 (strain HG52) (HHV-2).